A 171-amino-acid polypeptide reads, in one-letter code: Protein-export protein SecB (171 aa).

This sequence belongs to the SecB family. In terms of assembly, homotetramer, a dimer of dimers. One homotetramer interacts with 1 SecA dimer.

It localises to the cytoplasm. One of the proteins required for the normal export of preproteins out of the cell cytoplasm. It is a molecular chaperone that binds to a subset of precursor proteins, maintaining them in a translocation-competent state. It also specifically binds to its receptor SecA. In Xanthomonas oryzae pv. oryzae (strain MAFF 311018), this protein is Protein-export protein SecB.